A 400-amino-acid chain; its full sequence is Nicotinate phosphoribosyltransferase (400 aa).

H220 carries the phosphohistidine; by autocatalysis modification.

This sequence belongs to the NAPRTase family. Transiently phosphorylated on a His residue during the reaction cycle. Phosphorylation strongly increases the affinity for substrates and increases the rate of nicotinate D-ribonucleotide production. Dephosphorylation regenerates the low-affinity form of the enzyme, leading to product release.

It catalyses the reaction nicotinate + 5-phospho-alpha-D-ribose 1-diphosphate + ATP + H2O = nicotinate beta-D-ribonucleotide + ADP + phosphate + diphosphate. The protein operates within cofactor biosynthesis; NAD(+) biosynthesis; nicotinate D-ribonucleotide from nicotinate: step 1/1. In terms of biological role, catalyzes the synthesis of beta-nicotinate D-ribonucleotide from nicotinate and 5-phospho-D-ribose 1-phosphate at the expense of ATP. The polypeptide is Nicotinate phosphoribosyltransferase (Escherichia coli (strain K12 / MC4100 / BW2952)).